The chain runs to 187 residues: Calmodulin-like protein 1 (187 aa).

A2 carries the N-acetylalanine modification. EF-hand domains follow at residues 8 to 43 (EQIV…LGQN), 44 to 79 (PTEA…KLRD), 81 to 116 (DSEE…IGER), and 117 to 152 (LTDE…KKRR). The Ca(2+) site is built by D21, D23, D25, S27, E32, D57, D59, N61, N63, E68, D94, D96, N98, E105, D130, D132, D134, Q136, and E141. A disordered region spans residues 153-187 (KRIEEKREHDGGSRTKSAGPSAAPASKRGQKCVIL). Residues 154 to 165 (RIEEKREHDGGS) show a composition bias toward basic and acidic residues. Residues 169–178 (SAGPSAAPAS) are compositionally biased toward low complexity. A Cysteine methyl ester modification is found at C184. A lipid anchor (S-farnesyl cysteine) is attached at C184. Residues 185–187 (VIL) constitute a propeptide, removed in mature form.

The protein belongs to the calmodulin family. As to expression, expressed in roots, etiolated shoots and flowers.

It is found in the membrane. In terms of biological role, calcium-binding protein that binds and activates CAMK1, a calcium/calmodulin-dependent kinase. In Oryza sativa subsp. indica (Rice), this protein is Calmodulin-like protein 1 (CML1).